The primary structure comprises 102 residues: NADH-quinone oxidoreductase subunit K 1 (102 aa).

3 helical membrane-spanning segments follow: residues 5–25, 30–50, and 62–82; these read LYEV…CVVA, VIMM…TFVG, and VFSL…LAMV.

It belongs to the complex I subunit 4L family. NDH-1 is composed of 14 different subunits. Subunits NuoA, H, J, K, L, M, N constitute the membrane sector of the complex.

The protein localises to the cell inner membrane. The enzyme catalyses a quinone + NADH + 5 H(+)(in) = a quinol + NAD(+) + 4 H(+)(out). Functionally, NDH-1 shuttles electrons from NADH, via FMN and iron-sulfur (Fe-S) centers, to quinones in the respiratory chain. The immediate electron acceptor for the enzyme in this species is believed to be ubiquinone. Couples the redox reaction to proton translocation (for every two electrons transferred, four hydrogen ions are translocated across the cytoplasmic membrane), and thus conserves the redox energy in a proton gradient. The chain is NADH-quinone oxidoreductase subunit K 1 from Geobacter sp. (strain M21).